The following is a 475-amino-acid chain: Coagulation factor X (475 aa).

The first 20 residues, methionine 1–alanine 20, serve as a signal peptide directing secretion. A propeptide spanning residues glutamate 21–arginine 40 is cleaved from the precursor. One can recognise a Gla domain in the interval alanine 41 to valine 85. Residues glutamate 46, glutamate 47, glutamate 54, glutamate 56, glutamate 59, glutamate 60, glutamate 65, glutamate 66, glutamate 69, glutamate 72, and glutamate 79 each carry the 4-carboxyglutamate modification. Cysteine 57 and cysteine 62 are oxidised to a cystine. The EGF-like 1; calcium-binding domain maps to aspartate 86–glutamate 122. Disulfide bonds link cysteine 90/cysteine 101, cysteine 95/cysteine 110, cysteine 112/cysteine 121, cysteine 129/cysteine 140, cysteine 136/cysteine 152, cysteine 154/cysteine 167, cysteine 175/cysteine 348, cysteine 247/cysteine 252, cysteine 267/cysteine 283, cysteine 396/cysteine 410, and cysteine 421/cysteine 449. Position 103 is a (3R)-3-hydroxyaspartate (aspartate 103). The EGF-like 2 domain maps to isoleucine 125 to valine 168. Residues serine 186 to arginine 240 constitute a propeptide, activation peptide. N-linked (GlcNAc...) asparagine glycans are attached at residues asparagine 196, asparagine 207, and asparagine 228. Residues threonine 216–valine 237 are disordered. Positions isoleucine 241–arginine 473 constitute a Peptidase S1 domain. Histidine 282 serves as the catalytic Charge relay system. Asparagine 285 is a glycosylation site (N-linked (GlcNAc...) asparagine). Residue aspartate 328 is the Charge relay system of the active site. The Charge relay system role is filled by serine 425.

This sequence belongs to the peptidase S1 family. The two chains are formed from a single-chain precursor by the excision of two Arg residues and are held together by 1 or more disulfide bonds. In terms of processing, the vitamin K-dependent, enzymatic carboxylation of some glutamate residues allows the modified protein to bind calcium. The activation peptide is cleaved by factor IXa (in the intrinsic pathway), or by factor VIIa (in the extrinsic pathway). Post-translationally, the iron and 2-oxoglutarate dependent 3-hydroxylation of aspartate and asparagine is (R) stereospecific within EGF domains. In terms of tissue distribution, liver and chorioallantoic membrane.

It is found in the secreted. The catalysed reaction is Selective cleavage of Arg-|-Thr and then Arg-|-Ile bonds in prothrombin to form thrombin.. Factor Xa is a vitamin K-dependent glycoprotein that converts prothrombin to thrombin in the presence of factor Va, calcium and phospholipid during blood clotting. VAP cleaves the fusion proteins of Sendai virus, NDV, and influenza virus a at a specific single arginine-containing site, and plays a key role in the viral spreading in the allantoic sac. The polypeptide is Coagulation factor X (F10) (Gallus gallus (Chicken)).